Reading from the N-terminus, the 471-residue chain is Monocarboxylate transporter 4 (471 aa).

Topologically, residues 1-17 (MGGAVVDEGPTGIKAPD) are cytoplasmic. A helical membrane pass occupies residues 18 to 38 (GGWGWAVLFGCFIITGFSYAF). Residues 39–61 (PKAVSVFFKELMHEFGIGYSDTA) lie on the Extracellular side of the membrane. Residues 62 to 82 (WISSILLAMLYGTGPLCSMCV) form a helical membrane-spanning segment. Topologically, residues 83–84 (NR) are cytoplasmic. Residues 85 to 105 (FGCRPVMLVGGLFASLGMVAA) form a helical membrane-spanning segment. Residues 106-109 (SFCR) are Extracellular-facing. A helical membrane pass occupies residues 110-130 (SIIQIYLTTGVITGLGLALNF). The Cytoplasmic segment spans residues 131–149 (QPSLIMLNRYFNKRRPMAN). A helical membrane pass occupies residues 150-170 (GLAAAGSPVFLCALSPLGQLL). The Extracellular portion of the chain corresponds to 171 to 179 (QDHYGWRGG). The helical transmembrane segment at 180–200 (FLILGGLLLNCCVCAALMRPL) threads the bilayer. Residues 201-231 (VAPQASGGAEPHGPQRPSPRLLDLSVFRDRG) are Cytoplasmic-facing. The chain crosses the membrane as a helical span at residues 232 to 252 (FLIYAVAASIMVLGLFVPPVF). The Extracellular portion of the chain corresponds to 253-267 (VVSYAKDMGVPDTKA). The chain crosses the membrane as a helical span at residues 268-288 (AFLLTILGFIDIFARPTAGFI). Residues 289-298 (TGLKKVRPYS) are Cytoplasmic-facing. A helical membrane pass occupies residues 299–319 (VYLFSFAMFFNGFTDLTGSTA). The Extracellular portion of the chain corresponds to 320-321 (SD). Residues 322–342 (YGGLVVFCIFFGISYGMVGAL) traverse the membrane as a helical segment. At 343-355 (QFEVLMAIVGTQK) the chain is on the cytoplasmic side. Residues 356-376 (FSSAIGLVLLLEAVAVLIGPP) traverse the membrane as a helical segment. The Extracellular segment spans residues 377-391 (SGGKLLDATKVYKYV). A helical membrane pass occupies residues 392-412 (FILAGAEVLTSSLVLLLGNFF). Over 413–471 (CIGKRKRPEVTKPEEVASEEEKLHKPPVDVRVDSREVEHFLKAEPEKNGEVVHTPETSV) the chain is Cytoplasmic. Basolateral sorting signal stretches follow at residues 429 to 447 (ASEEEKLHKPPVDVRVDSR) and 447 to 471 (REVEHFLKAEPEKNGEVVHTPETSV). Ser430 carries the post-translational modification Phosphoserine. Thr466 carries the post-translational modification Phosphothreonine. Position 470 is a phosphoserine (Ser470).

Belongs to the major facilitator superfamily. Monocarboxylate porter (TC 2.A.1.13) family. In terms of assembly, interacts with BSG; interaction mediates SLC16A3 targeting to the plasma membrane. In terms of tissue distribution, detected in testis, small intestine, parotid gland, lung and brain. Small amounts are detected in heart, kidney and spleen. Expressed in skeletal muscle.

The protein localises to the cell membrane. It localises to the basolateral cell membrane. It catalyses the reaction (S)-lactate(in) + H(+)(in) = (S)-lactate(out) + H(+)(out). The catalysed reaction is pyruvate(out) + H(+)(out) = pyruvate(in) + H(+)(in). Proton-dependent transporter of monocarboxylates such as L-lactate and pyruvate. Plays a predominant role in the L-lactate efflux from highly glycolytic cells. The polypeptide is Monocarboxylate transporter 4 (Slc16a3) (Rattus norvegicus (Rat)).